The primary structure comprises 470 residues: Uronate isomerase (470 aa).

It belongs to the metallo-dependent hydrolases superfamily. Uronate isomerase family.

The enzyme catalyses D-glucuronate = D-fructuronate. It catalyses the reaction aldehydo-D-galacturonate = keto-D-tagaturonate. It participates in carbohydrate metabolism; pentose and glucuronate interconversion. The polypeptide is Uronate isomerase (Salmonella paratyphi A (strain ATCC 9150 / SARB42)).